The following is a 132-amino-acid chain: Large ribosomal subunit protein bL12 (132 aa).

Residues 102–126 (APKPIKEATNKDDAESIKKQLEEAG) show a composition bias toward basic and acidic residues. Residues 102 to 132 (APKPIKEATNKDDAESIKKQLEEAGAKASVK) form a disordered region.

This sequence belongs to the bacterial ribosomal protein bL12 family. In terms of assembly, homodimer. Part of the ribosomal stalk of the 50S ribosomal subunit. Forms a multimeric L10(L12)X complex, where L10 forms an elongated spine to which 2 to 4 L12 dimers bind in a sequential fashion. Binds GTP-bound translation factors.

Forms part of the ribosomal stalk which helps the ribosome interact with GTP-bound translation factors. Is thus essential for accurate translation. This is Large ribosomal subunit protein bL12 from Rippkaea orientalis (strain PCC 8801 / RF-1) (Cyanothece sp. (strain PCC 8801)).